We begin with the raw amino-acid sequence, 158 residues long: Large ribosomal subunit protein uL15 (158 aa).

This sequence belongs to the universal ribosomal protein uL15 family. In terms of assembly, part of the 50S ribosomal subunit.

In terms of biological role, binds to the 23S rRNA. This is Large ribosomal subunit protein uL15 from Aeropyrum pernix (strain ATCC 700893 / DSM 11879 / JCM 9820 / NBRC 100138 / K1).